Reading from the N-terminus, the 277-residue chain is Release factor glutamine methyltransferase (277 aa).

S-adenosyl-L-methionine is bound by residues 117–121 (GTGTG), D140, W168, and N183. 183–186 (NPPY) serves as a coordination point for substrate.

The protein belongs to the protein N5-glutamine methyltransferase family. PrmC subfamily.

It carries out the reaction L-glutaminyl-[peptide chain release factor] + S-adenosyl-L-methionine = N(5)-methyl-L-glutaminyl-[peptide chain release factor] + S-adenosyl-L-homocysteine + H(+). In terms of biological role, methylates the class 1 translation termination release factors RF1/PrfA and RF2/PrfB on the glutamine residue of the universally conserved GGQ motif. The sequence is that of Release factor glutamine methyltransferase from Salmonella typhimurium (strain LT2 / SGSC1412 / ATCC 700720).